The sequence spans 366 residues: NADH-quinone oxidoreductase subunit D (366 aa).

The protein belongs to the complex I 49 kDa subunit family. NDH-1 is composed of 14 different subunits. Subunits NuoB, C, D, E, F, and G constitute the peripheral sector of the complex.

Its subcellular location is the cell membrane. The catalysed reaction is a quinone + NADH + 5 H(+)(in) = a quinol + NAD(+) + 4 H(+)(out). Functionally, NDH-1 shuttles electrons from NADH, via FMN and iron-sulfur (Fe-S) centers, to quinones in the respiratory chain. The immediate electron acceptor for the enzyme in this species is believed to be a menaquinone. Couples the redox reaction to proton translocation (for every two electrons transferred, four hydrogen ions are translocated across the cytoplasmic membrane), and thus conserves the redox energy in a proton gradient. This Bacillus cytotoxicus (strain DSM 22905 / CIP 110041 / 391-98 / NVH 391-98) protein is NADH-quinone oxidoreductase subunit D.